Here is a 367-residue protein sequence, read N- to C-terminus: Queuine tRNA-ribosyltransferase (367 aa).

Asp-89 functions as the Proton acceptor in the catalytic mechanism. Substrate-binding positions include 89–93 (DSGGF), Asp-143, Gln-187, and Gly-214. The interval 245-251 (GVGTPAD) is RNA binding. The active-site Nucleophile is the Asp-264. The RNA binding; important for wobble base 34 recognition stretch occupies residues 269 to 273 (TRNAR). Zn(2+) contacts are provided by Cys-302, Cys-304, Cys-307, and His-333.

This sequence belongs to the queuine tRNA-ribosyltransferase family. In terms of assembly, homodimer. Within each dimer, one monomer is responsible for RNA recognition and catalysis, while the other monomer binds to the replacement base PreQ1. The cofactor is Zn(2+).

The catalysed reaction is 7-aminomethyl-7-carbaguanine + guanosine(34) in tRNA = 7-aminomethyl-7-carbaguanosine(34) in tRNA + guanine. It participates in tRNA modification; tRNA-queuosine biosynthesis. Its function is as follows. Catalyzes the base-exchange of a guanine (G) residue with the queuine precursor 7-aminomethyl-7-deazaguanine (PreQ1) at position 34 (anticodon wobble position) in tRNAs with GU(N) anticodons (tRNA-Asp, -Asn, -His and -Tyr). Catalysis occurs through a double-displacement mechanism. The nucleophile active site attacks the C1' of nucleotide 34 to detach the guanine base from the RNA, forming a covalent enzyme-RNA intermediate. The proton acceptor active site deprotonates the incoming PreQ1, allowing a nucleophilic attack on the C1' of the ribose to form the product. After dissociation, two additional enzymatic reactions on the tRNA convert PreQ1 to queuine (Q), resulting in the hypermodified nucleoside queuosine (7-(((4,5-cis-dihydroxy-2-cyclopenten-1-yl)amino)methyl)-7-deazaguanosine). The chain is Queuine tRNA-ribosyltransferase from Nitrosospira multiformis (strain ATCC 25196 / NCIMB 11849 / C 71).